Reading from the N-terminus, the 305-residue chain is Succinate--CoA ligase [ADP-forming] subunit alpha (305 aa).

Residues 17-20, Lys-43, and 96-98 contribute to the CoA site; these read TGKE and ITE. Tyr-161 is a binding site for substrate. His-249 serves as the catalytic Tele-phosphohistidine intermediate.

This sequence belongs to the succinate/malate CoA ligase alpha subunit family. In terms of assembly, heterotetramer of two alpha and two beta subunits.

It catalyses the reaction succinate + ATP + CoA = succinyl-CoA + ADP + phosphate. The catalysed reaction is GTP + succinate + CoA = succinyl-CoA + GDP + phosphate. The protein operates within carbohydrate metabolism; tricarboxylic acid cycle; succinate from succinyl-CoA (ligase route): step 1/1. Functionally, succinyl-CoA synthetase functions in the citric acid cycle (TCA), coupling the hydrolysis of succinyl-CoA to the synthesis of either ATP or GTP and thus represents the only step of substrate-level phosphorylation in the TCA. The alpha subunit of the enzyme binds the substrates coenzyme A and phosphate, while succinate binding and nucleotide specificity is provided by the beta subunit. In Aquifex aeolicus (strain VF5), this protein is Succinate--CoA ligase [ADP-forming] subunit alpha.